Here is a 1423-residue protein sequence, read N- to C-terminus: DNA-directed RNA polymerase subunit beta' (1423 aa).

Positions 71, 73, 86, and 89 each coordinate Zn(2+). Mg(2+)-binding residues include aspartate 461, aspartate 463, and aspartate 465. Cysteine 815, cysteine 889, cysteine 896, and cysteine 899 together coordinate Zn(2+).

This sequence belongs to the RNA polymerase beta' chain family. As to quaternary structure, the RNAP catalytic core consists of 2 alpha, 1 beta, 1 beta' and 1 omega subunit. When a sigma factor is associated with the core the holoenzyme is formed, which can initiate transcription. Mg(2+) serves as cofactor. The cofactor is Zn(2+).

The enzyme catalyses RNA(n) + a ribonucleoside 5'-triphosphate = RNA(n+1) + diphosphate. DNA-dependent RNA polymerase catalyzes the transcription of DNA into RNA using the four ribonucleoside triphosphates as substrates. In Actinobacillus pleuropneumoniae serotype 7 (strain AP76), this protein is DNA-directed RNA polymerase subunit beta'.